The primary structure comprises 630 residues: Membrane protein insertase YidC (630 aa).

The next 5 helical transmembrane spans lie at 10-30 (LMFL…VMGP), 396-416 (MVGN…LILF), 470-490 (VPML…TVTI), 528-548 (LIGA…LYGF), and 571-591 (FFPI…VIYW).

Belongs to the OXA1/ALB3/YidC family. Type 1 subfamily. As to quaternary structure, interacts with the Sec translocase complex via SecD. Specifically interacts with transmembrane segments of nascent integral membrane proteins during membrane integration.

Its subcellular location is the cell inner membrane. Its function is as follows. Required for the insertion and/or proper folding and/or complex formation of integral membrane proteins into the membrane. Involved in integration of membrane proteins that insert both dependently and independently of the Sec translocase complex, as well as at least some lipoproteins. Aids folding of multispanning membrane proteins. This Caulobacter sp. (strain K31) protein is Membrane protein insertase YidC.